The chain runs to 203 residues: Pyridoxine/pyridoxamine 5'-phosphate oxidase (203 aa).

Residues 51–56 (RMVLLK), 66–67 (YT), Arg72, Lys73, and Gln95 contribute to the FMN site. Residue Lys56 participates in substrate binding. The substrate site is built by Tyr113, Arg117, and Ser121. FMN is bound by residues 130 to 131 (QS) and Trp175. 181–183 (RLH) is a substrate binding site. Residue Arg185 participates in FMN binding.

It belongs to the pyridoxamine 5'-phosphate oxidase family. As to quaternary structure, homodimer. It depends on FMN as a cofactor.

It carries out the reaction pyridoxamine 5'-phosphate + O2 + H2O = pyridoxal 5'-phosphate + H2O2 + NH4(+). It catalyses the reaction pyridoxine 5'-phosphate + O2 = pyridoxal 5'-phosphate + H2O2. It participates in cofactor metabolism; pyridoxal 5'-phosphate salvage; pyridoxal 5'-phosphate from pyridoxamine 5'-phosphate: step 1/1. Its pathway is cofactor metabolism; pyridoxal 5'-phosphate salvage; pyridoxal 5'-phosphate from pyridoxine 5'-phosphate: step 1/1. Its function is as follows. Catalyzes the oxidation of either pyridoxine 5'-phosphate (PNP) or pyridoxamine 5'-phosphate (PMP) into pyridoxal 5'-phosphate (PLP). This is Pyridoxine/pyridoxamine 5'-phosphate oxidase from Novosphingobium aromaticivorans (strain ATCC 700278 / DSM 12444 / CCUG 56034 / CIP 105152 / NBRC 16084 / F199).